Here is a 345-residue protein sequence, read N- to C-terminus: Ferrochelatase (345 aa).

Fe cation contacts are provided by histidine 215 and glutamate 296.

The protein belongs to the ferrochelatase family.

Its subcellular location is the cytoplasm. It carries out the reaction heme b + 2 H(+) = protoporphyrin IX + Fe(2+). It participates in porphyrin-containing compound metabolism; protoheme biosynthesis; protoheme from protoporphyrin-IX: step 1/1. Catalyzes the ferrous insertion into protoporphyrin IX. This is Ferrochelatase from Rhodopseudomonas palustris (strain BisA53).